Consider the following 208-residue polypeptide: Imidazoleglycerol-phosphate dehydratase (208 aa).

The protein belongs to the imidazoleglycerol-phosphate dehydratase family.

It localises to the cytoplasm. It carries out the reaction D-erythro-1-(imidazol-4-yl)glycerol 3-phosphate = 3-(imidazol-4-yl)-2-oxopropyl phosphate + H2O. The protein operates within amino-acid biosynthesis; L-histidine biosynthesis; L-histidine from 5-phospho-alpha-D-ribose 1-diphosphate: step 6/9. The protein is Imidazoleglycerol-phosphate dehydratase of Prochlorococcus marinus (strain MIT 9211).